The chain runs to 517 residues: RNA-binding region-containing protein 3 (517 aa).

A disordered region spans residues 1 to 26; sequence MAAPEQPLAISRGCTSSSSLSPPRGD. The interval 1–257 is necessary for interaction with PDCD7; the sequence is MAAPEQPLAI…STDDEDRQRM (257 aa). S21 carries the phosphoserine modification. Positions 27-102 constitute an RRM 1 domain; sequence RTLLVRHLPA…HTLVVEFAKE (76 aa). Disordered regions lie at residues 106 to 130 and 213 to 254; these read VHSPCPTSGSEKKKRSDDPVEDDKE and MPLH…DEDR. S108 is modified (phosphoserine). Positions 115–130 are enriched in basic and acidic residues; sequence SEKKKRSDDPVEDDKE. Positions 211-380 are necessary for binding to m(7)G-capped U12 snRNA; sequence DYMPLHAPLP…LDITEEIKED (170 aa). Pro residues predominate over residues 217-230; the sequence is APLPPTSPQPPEEP. Over residues 231 to 252 the composition is skewed to acidic residues; that stretch reads PLPDEDEELSSEESEYESTDDE. The RRM 2 domain occupies 420–503; sequence CRIYVKNLAK…KPMVVQFARS (84 aa).

In terms of assembly, component of the U11/U12 snRNPs that are part of the U12-type spliceosome. Found in a complex with m(7)G-capped U12 snRNA. Interacts with PDCD7. As to expression, highly expressed in pancreas and kidney. Detected at lower levels in heart, brain, placenta, lung, liver, spleen, thymus, prostate, testis, ovary, small intestine, colon and leukocytes.

It is found in the nucleus. Its function is as follows. Participates in pre-mRNA U12-dependent splicing, performed by the minor spliceosome which removes U12-type introns. U12-type introns comprises less than 1% of all non-coding sequences. Binds to the 3'-stem-loop of m(7)G-capped U12 snRNA. This Homo sapiens (Human) protein is RNA-binding region-containing protein 3 (RNPC3).